We begin with the raw amino-acid sequence, 583 residues long: MILRYLIFFAQLWALCLANVNMFISKEEMNRTFGVKAELNYIEMGNVSSYSTKFHYRVMANIDYLSFTWNAVGIVHYEVYVESDDSSVLPIVRIPLKGTVPESLQDFTVEYRCAGHRSGQFAVSLYFTFKYGNKEPLKVKLRQEKICASRDGRRGLNGGYEGHEVDDTDSIDKAFFVIICIAAAFLLIVAATLICYFKRSKKEDMIPTRLPTSFRNSLKSTKSAQPFLLSTPRDGPPTLSAISSAPCSSSSASGNSIIPSKPRNIDVRRALLQLYQDRDAFQSLPLDMEGTFGEVRYAIWRQVDDVLNGDVDDEEDTFCNQEAVYTKTLKNNASPIQLDRFLSDALLFYNITPHQNLSQVACVASFGRFDRPETVTDFPLVCYRHQGFGNLKKFLTICRHGDKTKGAQTLRTHQLVSLATQVSSAVAHIHKYRIVHNDIAARNCLIAEVNGRLQVQLCDSALSRDLFPADYHCLGDNENRPLKWMSPEAIANELYSSAADVWSLGVLLWELMSLGGSPHAEIDPEEVYTMILKGKRLQQPNNCPDQLYEVMLCCWRVLSEDRPSSEQVVHGLRDFNIQLSQYI.

The signal sequence occupies residues methionine 1–alanine 18. The Extracellular portion of the chain corresponds to asparagine 19–lysine 173. The 126-residue stretch at methionine 22–cysteine 147 folds into the WIF domain. Residues asparagine 30 and asparagine 46 are each glycosylated (N-linked (GlcNAc...) asparagine). Cysteine 113 and cysteine 147 form a disulfide bridge. A helical membrane pass occupies residues alanine 174–isoleucine 194. Topologically, residues cysteine 195–isoleucine 583 are cytoplasmic. A Protein kinase domain is found at phenylalanine 281 to isoleucine 583. ATP is bound by residues aspartate 287–valine 295 and lysine 327.

This sequence belongs to the protein kinase superfamily. Tyr protein kinase family.

The protein resides in the cell membrane. It is found in the basolateral cell membrane. Its function is as follows. Has no detectable kinase activity in vitro and is unlikely to function as a tyrosine kinase in vivo. Receptor which may act as a receptor for Wnt ligand mom-2. Plays a role in controlling P7.p vulva precursor cell lineage orientation during vulva development. Regulates pop-1 asymmetric distribution in P7.p and its daughter cells. Plays a role in the migration of ALM neurons during embryogenesis. This is Inactive tyrosine-protein kinase RYK from Caenorhabditis elegans.